The sequence spans 427 residues: MWRFFYTSLLLICQPLILCFIGLLSVKSPRYRQRLAERYGFYGNASCPPPQGIFIHAASVGEVIAATPLVRQLQQDYPHLSITFTTFTPTGSERVKATFGDSVFHYYLPLDLPFSIHRFINFVQPKLCIVMETELWPNLIHQLFLRNIPFVIANARLSARSAHRYGKIKAHLQTMWSQISLIAAQDNISGKRYATLGYPKEKLNITGNIKYDLNTNDELLRKIDSLRTLWKQDRPIWIAASTHNGEDEIILKSHRALLAKYPNLLLLLVPRHPERFNVVADLLKKEKFQFIRRSTNELPNENTQVILGDSMGELMLMYGISDIAFVGGSLVKHGGHNPLEPLAFKMPVITGKHTFNFPEIFRMLVEVQGVLEVNSTADALERAVEALLNSKESRERLGNAGYEVLMENRGALQRLLDLLKPYLERNV.

A helical; Signal-anchor membrane pass occupies residues 4-24; that stretch reads FFYTSLLLICQPLILCFIGLL. Glu-62 serves as the catalytic Proton acceptor. CMP-binding positions include 270–271, 311–313, and 337–340; these read PR, MGE, and NPLE.

Belongs to the glycosyltransferase group 1 family. Glycosyltransferase 30 subfamily.

The protein resides in the cell inner membrane. The enzyme catalyses lipid IVA (E. coli) + CMP-3-deoxy-beta-D-manno-octulosonate = alpha-Kdo-(2-&gt;6)-lipid IVA (E. coli) + CMP + H(+). Its pathway is bacterial outer membrane biogenesis; LPS core biosynthesis. In terms of biological role, involved in lipopolysaccharide (LPS) biosynthesis. Catalyzes the transfer of a single 3-deoxy-D-manno-octulosonate (Kdo) residue from CMP-Kdo to lipid IV(A), the tetraacyldisaccharide-1,4'-bisphosphate precursor of lipid A. Is strictly monofunctional, i.e. is capable of adding only a single Kdo residue to the acceptor lipid. This chain is 3-deoxy-D-manno-octulosonic acid transferase (waaA), found in Haemophilus influenzae (strain ATCC 51907 / DSM 11121 / KW20 / Rd).